The following is a 109-amino-acid chain: MQQLEFYPIAFLILAVMLEIVANILLKMSDGFRRKWLGILSLLSVLGAFSALAQAVKGIELSVAYAMWGGFGIAATVAAGWILFNQRLNYKGWIGLILLLAGMVMIKLS.

4 helical membrane-spanning segments follow: residues 6-26, 36-56, 64-84, and 88-108; these read FYPI…NILL, WLGI…AQAV, AYAM…WILF, and LNYK…MIKL.

The protein belongs to the drug/metabolite transporter (DMT) superfamily. Small multidrug resistance (SMR) (TC 2.A.7.1) family. MdtI subfamily. Forms a complex with MdtJ.

The protein resides in the cell inner membrane. In terms of biological role, catalyzes the excretion of spermidine. This chain is Spermidine export protein MdtI, found in Yersinia pseudotuberculosis serotype I (strain IP32953).